The primary structure comprises 351 residues: Holliday junction branch migration complex subunit RuvB (351 aa).

Positions 1–186 (MDEKIETRLI…FGIVQRLEFY (186 aa)) are large ATPase domain (RuvB-L). ATP is bound by residues I25, R26, G67, K70, T71, T72, 133 to 135 (EDF), R176, Y186, and R223. Residue T71 coordinates Mg(2+). A small ATPAse domain (RuvB-S) region spans residues 187–257 (RIPDLIHIVK…IAKEALDLLN (71 aa)). The interval 260-351 (IRGLDVMDRK…ENFDLLGKVE (92 aa)) is head domain (RuvB-H). DNA-binding residues include R296, R315, and R320.

Belongs to the RuvB family. In terms of assembly, homohexamer. Forms an RuvA(8)-RuvB(12)-Holliday junction (HJ) complex. HJ DNA is sandwiched between 2 RuvA tetramers; dsDNA enters through RuvA and exits via RuvB. An RuvB hexamer assembles on each DNA strand where it exits the tetramer. Each RuvB hexamer is contacted by two RuvA subunits (via domain III) on 2 adjacent RuvB subunits; this complex drives branch migration. In the full resolvosome a probable DNA-RuvA(4)-RuvB(12)-RuvC(2) complex forms which resolves the HJ.

It is found in the cytoplasm. It catalyses the reaction ATP + H2O = ADP + phosphate + H(+). In terms of biological role, the RuvA-RuvB-RuvC complex processes Holliday junction (HJ) DNA during genetic recombination and DNA repair, while the RuvA-RuvB complex plays an important role in the rescue of blocked DNA replication forks via replication fork reversal (RFR). RuvA specifically binds to HJ cruciform DNA, conferring on it an open structure. The RuvB hexamer acts as an ATP-dependent pump, pulling dsDNA into and through the RuvAB complex. RuvB forms 2 homohexamers on either side of HJ DNA bound by 1 or 2 RuvA tetramers; 4 subunits per hexamer contact DNA at a time. Coordinated motions by a converter formed by DNA-disengaged RuvB subunits stimulates ATP hydrolysis and nucleotide exchange. Immobilization of the converter enables RuvB to convert the ATP-contained energy into a lever motion, pulling 2 nucleotides of DNA out of the RuvA tetramer per ATP hydrolyzed, thus driving DNA branch migration. The RuvB motors rotate together with the DNA substrate, which together with the progressing nucleotide cycle form the mechanistic basis for DNA recombination by continuous HJ branch migration. Branch migration allows RuvC to scan DNA until it finds its consensus sequence, where it cleaves and resolves cruciform DNA. The polypeptide is Holliday junction branch migration complex subunit RuvB (Coxiella burnetii (strain CbuG_Q212) (Coxiella burnetii (strain Q212))).